The chain runs to 260 residues: Small ribosomal subunit protein uS2 (260 aa).

Residues 223-260 (EGRQGEDEEEASQEVAEGVSKDSLEDLKKSVEEGSNEE) form a disordered region. Over residues 241–254 (VSKDSLEDLKKSVE) the composition is skewed to basic and acidic residues.

It belongs to the universal ribosomal protein uS2 family.

The chain is Small ribosomal subunit protein uS2 from Pediococcus pentosaceus (strain ATCC 25745 / CCUG 21536 / LMG 10740 / 183-1w).